The primary structure comprises 425 residues: Elongation factor 1-alpha (425 aa).

The 217-residue stretch at Lys-5–Thr-221 folds into the tr-type G domain. The interval Gly-14–Ser-21 is G1. Gly-14–Ser-21 is a GTP binding site. Ser-21 is a Mg(2+) binding site. The segment at Gly-70–Asp-74 is G2. Residues Asp-91 to Gly-94 are G3. GTP is bound by residues Asp-91–His-95 and Asn-146–Asp-149. Positions Asn-146–Asp-149 are G4. The G5 stretch occupies residues Ser-185–Leu-187.

It belongs to the TRAFAC class translation factor GTPase superfamily. Classic translation factor GTPase family. EF-Tu/EF-1A subfamily.

The protein localises to the cytoplasm. It carries out the reaction GTP + H2O = GDP + phosphate + H(+). In terms of biological role, GTP hydrolase that promotes the GTP-dependent binding of aminoacyl-tRNA to the A-site of ribosomes during protein biosynthesis. In Methanoregula boonei (strain DSM 21154 / JCM 14090 / 6A8), this protein is Elongation factor 1-alpha.